The sequence spans 292 residues: N-acetylneuraminate lyase (292 aa).

Residues Ser47 and Thr48 each coordinate aceneuramate. The active-site Proton donor is Tyr136. The active-site Schiff-base intermediate with substrate is Lys164. Aceneuramate-binding residues include Thr166, Gly188, Asp190, Glu191, and Ser207.

It belongs to the DapA family. NanA subfamily. As to quaternary structure, homotetramer.

Its subcellular location is the cytoplasm. It catalyses the reaction aceneuramate = aldehydo-N-acetyl-D-mannosamine + pyruvate. It functions in the pathway amino-sugar metabolism; N-acetylneuraminate degradation; D-fructose 6-phosphate from N-acetylneuraminate: step 1/5. Its function is as follows. Catalyzes the reversible aldol cleavage of N-acetylneuraminic acid (sialic acid; Neu5Ac) to form pyruvate and N-acetylmannosamine (ManNAc) via a Schiff base intermediate. This chain is N-acetylneuraminate lyase, found in Histophilus somni (strain 129Pt) (Haemophilus somnus).